Consider the following 2034-residue polypeptide: Sperm vesicle fusion protein fer-1 (2034 aa).

A disordered region spans residues 1–80; it reads MTVKEKLLKV…GGSDIELLPD (80 aa). The Cytoplasmic portion of the chain corresponds to 1–1998; the sequence is MTVKEKLLKV…CIKYFWHYYG (1998 aa). The span at 66-79 shows a compositional bias: acidic residues; it reads ELSDDGGSDIELLP. 4 consecutive C2 domains span residues 229–367, 954–1082, 1120–1246, and 1363–1484; these read RIDE…YLPT, DSED…PQWF, YKER…KSDH, and KKGK…ATGG. The disordered stretch occupies residues 1563–1619; the sequence is QKAGKENFSDGSDQQNEDVSDGSWDEEDLEREKEKLKWEKHRSKGKPLKKVTTEKAE. Residues 1577–1591 are compositionally biased toward acidic residues; sequence QNEDVSDGSWDEEDL. Over residues 1600-1611 the composition is skewed to basic residues; the sequence is WEKHRSKGKPLK. In terms of domain architecture, C2 5 spans 1684-1831; the sequence is EYGAIPAPFN…EGIGSPSDVG (148 aa). Residues 1953–1972 form a disordered region; sequence QEPAGKKRSEPNHSPFLEKP. The chain crosses the membrane as a helical span at residues 1999-2019; the sequence is LQILLWLIIIVILILTIFVLL. Residues 2020-2034 are Extracellular-facing; the sequence is HTWPTILAEIIKAIF.

Belongs to the ferlin family. Exclusively expressed in the testis.

Its subcellular location is the membrane. Functionally, required for the fusion of the membranous organelles (MOs) with the plasma membrane, a process essential in spermiogenesis. The polypeptide is Sperm vesicle fusion protein fer-1 (fer-1) (Caenorhabditis elegans).